A 643-amino-acid polypeptide reads, in one-letter code: Threonine--tRNA ligase (643 aa).

One can recognise a TGS domain in the interval 3-64 (DMINITFPDG…QEDGAVEIIT (62 aa)). The tract at residues 245–542 (DHRKLGKELK…LIEEHKGALP (298 aa)) is catalytic. Residues Cys-338, His-389, and His-519 each contribute to the Zn(2+) site.

Belongs to the class-II aminoacyl-tRNA synthetase family. Homodimer. Requires Zn(2+) as cofactor.

Its subcellular location is the cytoplasm. It catalyses the reaction tRNA(Thr) + L-threonine + ATP = L-threonyl-tRNA(Thr) + AMP + diphosphate + H(+). Catalyzes the attachment of threonine to tRNA(Thr) in a two-step reaction: L-threonine is first activated by ATP to form Thr-AMP and then transferred to the acceptor end of tRNA(Thr). Also edits incorrectly charged L-seryl-tRNA(Thr). The protein is Threonine--tRNA ligase of Bacillus velezensis (strain DSM 23117 / BGSC 10A6 / LMG 26770 / FZB42) (Bacillus amyloliquefaciens subsp. plantarum).